We begin with the raw amino-acid sequence, 465 residues long: Deoxyguanosinetriphosphate triphosphohydrolase-like protein (465 aa).

A disordered region spans residues 1–22 (MKWDKLLNDKRRRESGVTRSKN). The HD domain maps to 63–252 (RLTHSMEVST…LEVADDIAYL (190 aa)).

The protein belongs to the dGTPase family. Type 3 subfamily.

In Listeria innocua serovar 6a (strain ATCC BAA-680 / CLIP 11262), this protein is Deoxyguanosinetriphosphate triphosphohydrolase-like protein.